A 210-amino-acid chain; its full sequence is Somatotropin-2 (210 aa).

Residues Met1–Ala22 form the signal peptide. His38 is a Zn(2+) binding site. A disulfide bridge links Cys71 with Cys183. Glu192 is a binding site for Zn(2+). Cys200 and Cys208 are oxidised to a cystine.

It belongs to the somatotropin/prolactin family.

Its subcellular location is the secreted. Its function is as follows. Growth hormone plays an important role in growth control and is involved in the regulation of several anabolic processes. Implicated as an osmoregulatory substance important for seawater adaptation. The polypeptide is Somatotropin-2 (gh2) (Carassius auratus (Goldfish)).